The following is a 226-amino-acid chain: Membrane protein (226 aa).

Over 1-11 (MSNGSIPVDEV) the chain is Virion surface. A helical membrane pass occupies residues 12 to 32 (IEHLRNWNFTWNIILTILLVV). At 33–41 (LQYGHYKYS) the chain is on the intravirion side. Residues 42 to 62 (VFLYGVKMAILWILWPLVLAL) form a helical membrane-spanning segment. Over 63 to 75 (SLFDAWASFQVNW) the chain is Virion surface. A helical membrane pass occupies residues 76 to 96 (VFFAFSILMACITLMLWIMYF). The Intravirion portion of the chain corresponds to 97–226 (VNSIRLWRRT…TDSEKVPHLV (130 aa)). The segment at 200 to 216 (RSKHGDYSAVSNPSAVL) is interaction with N protein.

This sequence belongs to the alphacoronaviruses M protein family. Homomultimer. Interacts with envelope E protein in the budding compartment of the host cell, which is located between endoplasmic reticulum and the Golgi complex. Forms a complex with HE and S proteins. Interacts with nucleocapsid N protein. This interaction probably participates in RNA packaging into the virus.

The protein resides in the virion membrane. Its subcellular location is the host Golgi apparatus membrane. Component of the viral envelope that plays a central role in virus morphogenesis and assembly via its interactions with other viral proteins. The protein is Membrane protein of Sus scrofa (Pig).